Here is a 443-residue protein sequence, read N- to C-terminus: UDP-N-acetylmuramate--L-alanine ligase (443 aa).

110–116 (GAHGKTS) provides a ligand contact to ATP.

This sequence belongs to the MurCDEF family.

The protein localises to the cytoplasm. The catalysed reaction is UDP-N-acetyl-alpha-D-muramate + L-alanine + ATP = UDP-N-acetyl-alpha-D-muramoyl-L-alanine + ADP + phosphate + H(+). It participates in cell wall biogenesis; peptidoglycan biosynthesis. Its function is as follows. Cell wall formation. In Streptococcus equi subsp. zooepidemicus (strain MGCS10565), this protein is UDP-N-acetylmuramate--L-alanine ligase.